A 61-amino-acid polypeptide reads, in one-letter code: Potassium channel toxin alpha-KTx 18.1 (61 aa).

The first 24 residues, 1-24 (MRFTGIILILISMTLIDSFFEMKV), serve as a signal peptide directing secretion. Disulfide bonds link C33-C52, C38-C57, and C42-C59.

In terms of tissue distribution, expressed by the venom gland.

It localises to the secreted. Its function is as follows. Reversible blocker of both Kv1.3/KCNA3 potassium channels (high affinity) and Shaker B (mammalian Kv1.1 analog) potassium channels (very low affinity). The protein is Potassium channel toxin alpha-KTx 18.1 of Tityus obscurus (Amazonian scorpion).